We begin with the raw amino-acid sequence, 375 residues long: Succinyl-diaminopimelate desuccinylase (375 aa).

Histidine 66 lines the Zn(2+) pocket. Aspartate 68 is a catalytic residue. Aspartate 99 provides a ligand contact to Zn(2+). Catalysis depends on glutamate 133, which acts as the Proton acceptor. 3 residues coordinate Zn(2+): glutamate 134, glutamate 162, and histidine 348.

Belongs to the peptidase M20A family. DapE subfamily. As to quaternary structure, homodimer. Zn(2+) serves as cofactor. The cofactor is Co(2+).

The catalysed reaction is N-succinyl-(2S,6S)-2,6-diaminopimelate + H2O = (2S,6S)-2,6-diaminopimelate + succinate. It functions in the pathway amino-acid biosynthesis; L-lysine biosynthesis via DAP pathway; LL-2,6-diaminopimelate from (S)-tetrahydrodipicolinate (succinylase route): step 3/3. Its function is as follows. Catalyzes the hydrolysis of N-succinyl-L,L-diaminopimelic acid (SDAP), forming succinate and LL-2,6-diaminopimelate (DAP), an intermediate involved in the bacterial biosynthesis of lysine and meso-diaminopimelic acid, an essential component of bacterial cell walls. The chain is Succinyl-diaminopimelate desuccinylase from Shigella sonnei (strain Ss046).